The following is a 284-amino-acid chain: ATP synthase gamma chain (284 aa).

It belongs to the ATPase gamma chain family. In terms of assembly, F-type ATPases have 2 components, CF(1) - the catalytic core - and CF(0) - the membrane proton channel. CF(1) has five subunits: alpha(3), beta(3), gamma(1), delta(1), epsilon(1). CF(0) has three main subunits: a, b and c.

The protein localises to the cell membrane. Functionally, produces ATP from ADP in the presence of a proton gradient across the membrane. The gamma chain is believed to be important in regulating ATPase activity and the flow of protons through the CF(0) complex. The chain is ATP synthase gamma chain from Pelotomaculum thermopropionicum (strain DSM 13744 / JCM 10971 / SI).